The following is a 108-amino-acid chain: Replication initiation control protein YabA (108 aa).

Zn(2+) is bound by residues histidine 83, cysteine 85, cysteine 99, and cysteine 102.

Belongs to the YabA family. Homotetramer. Interacts with both DnaA and DnaN, acting as a bridge between these two proteins. Zn(2+) serves as cofactor.

It is found in the cytoplasm. It localises to the nucleoid. Involved in control of chromosome replication initiation. Inhibits the cooperative binding of DnaA to the oriC region, thus negatively regulating initiation of chromosome replication. Inhibits the ability of DnaA-ATP to form a helix on DNA; does not disassemble preformed DnaA-DNA helices. Decreases the residence time of DnaA on the chromosome at its binding sites (oriC, replication forks and promoter-binding sites). Tethers DnaA to the replication machinery via the DNA polymerase beta sliding clamp subunit (dnaN). Associates with oriC and other DnaA targets on the chromosome in a DnaA-dependent manner. In Lactococcus lactis subsp. lactis (strain IL1403) (Streptococcus lactis), this protein is Replication initiation control protein YabA.